Here is a 465-residue protein sequence, read N- to C-terminus: Anthocyanidin 3-O-glucosyltransferase 2 (465 aa).

Residue His-22 is the Proton acceptor of the active site. Positions 22 and 87 each coordinate an anthocyanidin. Residue Asp-122 is the Charge relay of the active site. Position 145 (Thr-145) interacts with UDP-alpha-D-glucose. His-154 contributes to the an anthocyanidin binding site. Residues Ala-345, Gln-347, His-362, Trp-365, Asn-366, Ser-367, and Glu-370 each coordinate UDP-alpha-D-glucose. Gly-385 is an an anthocyanidin binding site. UDP-alpha-D-glucose contacts are provided by Asp-386 and Gln-387.

Belongs to the UDP-glycosyltransferase family. As to expression, highest expression detected in fruit, with very low levels detected in petal and leaf.

The catalysed reaction is an anthocyanidin + UDP-alpha-D-glucose + H(+) = an anthocyanidin 3-O-beta-D-glucoside + UDP. It catalyses the reaction pelargonidin + UDP-alpha-D-glucose = pelargonidin 3-O-beta-D-glucoside + UDP. It carries out the reaction cyanidin + UDP-alpha-D-glucose = cyanidin 3-O-beta-D-glucoside + UDP + H(+). The protein operates within pigment biosynthesis; anthocyanin biosynthesis. In the presence of other necessary color factors, this glycosylation reaction allows the accumulation of anthocyanin pigments. Anthocyanidins are the preferred substrates, while flavonols are only a minor substrate in vitro. This Fragaria ananassa (Strawberry) protein is Anthocyanidin 3-O-glucosyltransferase 2.